The primary structure comprises 256 residues: E3 ubiquitin-protein ligase MIR2 (256 aa).

Over 1–83 the chain is Cytoplasmic; the sequence is MASKDVEEGV…NLWPEMERQE (83 aa). The RING-CH-type zinc finger occupies 7 to 66; sequence EEGVEGPICWICREEVGNEGIHPCACTGELDVVHPQCLSTWLTVSRNTACQMCRVIYRTR. The Zn(2+) site is built by Cys-15, Cys-18, Cys-30, Cys-32, His-40, Cys-43, Cys-56, and Cys-59. Residues 84-104 form a helical membrane-spanning segment; sequence IFELFLLMSVVVAGLVGVALC. Residues 105–124 are Extracellular-facing; sequence TWTLLVILTAPAGTFSPGAV. The helical transmembrane segment at 125–145 threads the bilayer; the sequence is LGFLCFFGFYQIFIVFAFGGI. Over 146 to 256 the chain is Cytoplasmic; the sequence is CRVSGTVRAL…VRKNHPKNNG (111 aa). The segment at 179-256 is disordered; the sequence is DNIELTVLVG…VRKNHPKNNG (78 aa). The span at 193–203 shows a compositional bias: acidic residues; it reads TDEEPTDESSE. A compositionally biased stretch (basic residues) spans 245-256; sequence KPVRKNHPKNNG.

Binds human MHC-I, CD86, ICAM1 and CD1D.

The protein resides in the host cell membrane. It is found in the host endoplasmic reticulum. The catalysed reaction is S-ubiquitinyl-[E2 ubiquitin-conjugating enzyme]-L-cysteine + [acceptor protein]-L-lysine = [E2 ubiquitin-conjugating enzyme]-L-cysteine + N(6)-ubiquitinyl-[acceptor protein]-L-lysine.. It participates in protein modification; protein ubiquitination. Functionally, membrane-bound E3 ubiquitin ligase expressed at the immediate early stage of viral reactivation to mediate polyubiquitination of various host membrane proteins related to the immune response. Promotes ubiquitination and subsequent degradation of host MHC-I, CD86, DC-SIGN and DC-SIGNR, ICAM1 and CD1D molecules, presumably to prevent lysis of infected cells by cytotoxic T-lymphocytes and NK cell. Plays a role in the down-regulation of the host stress-induced NKG2D ligands MICA, MICB and CLEC2B, which enable immune cells expressing the NKG2D receptor to recognize and annihilate infected cells prior to viral spread. Alters monocyte metabolism and proliferation by mediating rapid internalization of cellular growth factor-binding receptor tyrosine kinases from the surface leading to increased signaling. This chain is E3 ubiquitin-protein ligase MIR2 (K5), found in Homo sapiens (Human).